A 295-amino-acid chain; its full sequence is N-acetylmuramic acid 6-phosphate etherase (295 aa).

Residues 53–216 (AIQRFNNGGR…STMTMIGVGK (164 aa)) enclose the SIS domain. The active-site Proton donor is the E81. The active site involves E112.

Belongs to the GCKR-like family. MurNAc-6-P etherase subfamily. In terms of assembly, homodimer.

It carries out the reaction N-acetyl-D-muramate 6-phosphate + H2O = N-acetyl-D-glucosamine 6-phosphate + (R)-lactate. It functions in the pathway amino-sugar metabolism; N-acetylmuramate degradation. In terms of biological role, specifically catalyzes the cleavage of the D-lactyl ether substituent of MurNAc 6-phosphate, producing GlcNAc 6-phosphate and D-lactate. The protein is N-acetylmuramic acid 6-phosphate etherase of Staphylococcus epidermidis (strain ATCC 35984 / DSM 28319 / BCRC 17069 / CCUG 31568 / BM 3577 / RP62A).